Here is a 431-residue protein sequence, read N- to C-terminus: 23S rRNA (uracil(1939)-C(5))-methyltransferase RlmD (431 aa).

The TRAM domain maps to 10-68 (RVTTRQIITVKVNDLDSFGQGVARHNGKALFIPGLLPEESAEVIITEDKKQFARARVSR). The [4Fe-4S] cluster site is built by Cys81, Cys87, Cys90, and Cys161. Gln264, Phe293, Asn298, Glu314, Asn341, and Asp362 together coordinate S-adenosyl-L-methionine. The Nucleophile role is filled by Cys388.

It belongs to the class I-like SAM-binding methyltransferase superfamily. RNA M5U methyltransferase family. RlmD subfamily.

It catalyses the reaction uridine(1939) in 23S rRNA + S-adenosyl-L-methionine = 5-methyluridine(1939) in 23S rRNA + S-adenosyl-L-homocysteine + H(+). Functionally, catalyzes the formation of 5-methyl-uridine at position 1939 (m5U1939) in 23S rRNA. In Salmonella typhimurium (strain LT2 / SGSC1412 / ATCC 700720), this protein is 23S rRNA (uracil(1939)-C(5))-methyltransferase RlmD.